Here is a 391-residue protein sequence, read N- to C-terminus: cAMP-dependent protein kinase regulatory subunit (391 aa).

The segment at 1 to 84 (MFKSPFGANA…PPNPESYPAQ (84 aa)) is disordered. The segment at 1-131 (MFKSPFGANA…RLKTAIAGNF (131 aa)) is dimerization and phosphorylation. The segment covering 38–55 (TVTSPTSPNFGMNAQSMF) has biased composition (polar residues). Position 92 is a phosphoserine (serine 92). Residues 132-261 (LFSH…FLRE), glutamate 210, arginine 219, 264-381 (LLQT…DIKT), glutamate 331, and arginine 340 each bind 3',5'-cyclic AMP.

It belongs to the cAMP-dependent kinase regulatory chain family. In terms of assembly, tetramer, composed of 2 regulatory (R) and 2 catalytic (C) subunits. In the presence of cAMP it dissociates into 2 active monomeric C subunits and an R dimer.

This Colletotrichum orbiculare (strain 104-T / ATCC 96160 / CBS 514.97 / LARS 414 / MAFF 240422) (Cucumber anthracnose fungus) protein is cAMP-dependent protein kinase regulatory subunit (PKAR).